We begin with the raw amino-acid sequence, 361 residues long: 3-dehydroquinate synthase (361 aa).

NAD(+) is bound by residues 72-77 (SGEKEK), 130-131 (TT), K142, and K151. Residues E184, H247, and H264 each contribute to the Zn(2+) site.

It belongs to the sugar phosphate cyclases superfamily. Dehydroquinate synthase family. Co(2+) is required as a cofactor. Requires Zn(2+) as cofactor. NAD(+) serves as cofactor.

Its subcellular location is the cytoplasm. It catalyses the reaction 7-phospho-2-dehydro-3-deoxy-D-arabino-heptonate = 3-dehydroquinate + phosphate. Its pathway is metabolic intermediate biosynthesis; chorismate biosynthesis; chorismate from D-erythrose 4-phosphate and phosphoenolpyruvate: step 2/7. Its function is as follows. Catalyzes the conversion of 3-deoxy-D-arabino-heptulosonate 7-phosphate (DAHP) to dehydroquinate (DHQ). In Bacillus cereus (strain G9842), this protein is 3-dehydroquinate synthase.